The primary structure comprises 175 residues: Putative carbonic anhydrase-like protein YbcF (175 aa).

The protein belongs to the beta-class carbonic anhydrase family.

The polypeptide is Putative carbonic anhydrase-like protein YbcF (ybcF) (Bacillus subtilis (strain 168)).